The primary structure comprises 522 residues: MEFPDHSRHLLQCLSEQRHQGFLCDCTVLVGDAQFRAHRAVLASCSMYFHLFYKDQLDKRDIVHLNSDIVTAPAFALLLEFMYEGKLQFKDLPIEDVLAAASYLHMYDIVKVCKKKLKEKATTEADSTKKEEDASSCSDKVESLSDGSSHMAGDLPSDEDEGEDDKLNILPSKRDLAAEPGNMWMRLPSDAAGIPQAGGEAEPHATAAGKTVASPCSSTESLSQRSVTSVRDSADVDCVLDLSVKSSLSGVENLNSSYFSSQDVLRGNLVQVKVEKEASCDESDVGTNDYDMEHSTVKESVSANNRVQYEPAHLAPLREDSVLRELDREDKASDDEMMTPESERVQVEGGMESSLLPYVSNILSPAGQIFMCPLCNKVFPSPHILQIHLSTHFREQDGIRSKPAADVNVPTCSLCGKTFSCMYTLKRHERTHSGEKPYTCTQCGKSFQYSHNLSRHAVVHTREKPHACKWCERRFTQSGDLYRHIRKFHCELVNSLSVKSEALSLPTVRDWTLEDSSQELWR.

One can recognise a BTB domain in the interval 24–91 (CDCTVLVGDA…MYEGKLQFKD (68 aa)). Positions 121–143 (ATTEADSTKKEEDASSCSDKVES) are enriched in basic and acidic residues. The disordered stretch occupies residues 121–166 (ATTEADSTKKEEDASSCSDKVESLSDGSSHMAGDLPSDEDEGEDDK). Ser-157 carries the post-translational modification Phosphoserine. Residue Lys-273 forms a Glycyl lysine isopeptide (Lys-Gly) (interchain with G-Cter in SUMO2) linkage. Residues 310 to 427 (EPAHLAPLRE…TFSCMYTLKR (118 aa)) are interaction with DNMT3A. 4 C2H2-type zinc fingers span residues 370–392 (FMCPLCNKVFPSPHILQIHLSTH), 410–432 (PTCSLCGKTFSCMYTLKRHERTH), 438–460 (YTCTQCGKSFQYSHNLSRHAVVH), and 466–489 (HACKWCERRFTQSGDLYRHIRKFH). Ser-516 and Ser-517 each carry phosphoserine.

It belongs to the krueppel C2H2-type zinc-finger protein family. ZBTB18 subfamily. In terms of assembly, interacts with DNMT3A.

The protein resides in the nucleus. Transcriptional repressor that plays a role in various developmental processes such as myogenesis and brain development. Specifically binds the consensus DNA sequence 5'-[AC]ACATCTG[GT][AC]-3' which contains the E box core, and acts by recruiting chromatin remodeling multiprotein complexes. Plays a key role in myogenesis by directly repressing the expression of ID2 and ID3, 2 inhibitors of skeletal myogenesis. Also involved in controlling cell division of progenitor cells and regulating the survival of postmitotic cortical neurons. May also play a role in the organization of chromosomes in the nucleus. The chain is Zinc finger and BTB domain-containing protein 18 (Zbtb18) from Rattus norvegicus (Rat).